The following is a 470-amino-acid chain: Neuraminidase (470 aa).

Over 1 to 14 (MNPNQKIITIGSIS) the chain is Intravirion. The segment at 11–32 (GSISLGLVVFNVLLHVVSIIVT) is involved in apical transport and lipid raft association. Residues 15-35 (LGLVVFNVLLHVVSIIVTVLI) traverse the membrane as a helical segment. The segment at 32–86 (TVLILGKGENNGICNGTVVREYNETVRIERVTQWHNTNVVEYVPYWNGGTYMNNT) is hypervariable stalk region. The Virion surface portion of the chain corresponds to 36–470 (LGKGENNGIC…AILPFDIDKM (435 aa)). Residues N46, N54, and N84 are each glycosylated (N-linked (GlcNAc...) asparagine; by host). Positions 89–470 (ICDVKGFAPF…AILPFDIDKM (382 aa)) are head of neuraminidase. 8 cysteine pairs are disulfide-bonded: C90-C417, C122-C127, C182-C229, C231-C236, C277-C290, C279-C288, C316-C335, and C421-C446. Substrate is bound at residue R116. N144 carries an N-linked (GlcNAc...) asparagine; by host glycan. D149 acts as the Proton donor/acceptor in catalysis. R150 provides a ligand contact to substrate. Position 275–276 (275–276 (EE)) interacts with substrate. Residue R291 participates in substrate binding. D292 serves as a coordination point for Ca(2+). Residue N293 is glycosylated (N-linked (GlcNAc...) asparagine; by host). Ca(2+) is bound by residues G296 and D322. R368 contributes to the substrate binding site. Residue N398 is glycosylated (N-linked (GlcNAc...) asparagine; by host). The active-site Nucleophile is the Y402.

This sequence belongs to the glycosyl hydrolase 34 family. Homotetramer. The cofactor is Ca(2+). Post-translationally, N-glycosylated.

It is found in the virion membrane. The protein localises to the host apical cell membrane. It catalyses the reaction Hydrolysis of alpha-(2-&gt;3)-, alpha-(2-&gt;6)-, alpha-(2-&gt;8)- glycosidic linkages of terminal sialic acid residues in oligosaccharides, glycoproteins, glycolipids, colominic acid and synthetic substrates.. Inhibited by the neuraminidase inhibitors zanamivir (Relenza) and oseltamivir (Tamiflu). These drugs interfere with the release of progeny virus from infected cells and are effective against all influenza strains. Resistance to neuraminidase inhibitors is quite rare. Its function is as follows. Catalyzes the removal of terminal sialic acid residues from viral and cellular glycoconjugates. Cleaves off the terminal sialic acids on the glycosylated HA during virus budding to facilitate virus release. Additionally helps virus spread through the circulation by further removing sialic acids from the cell surface. These cleavages prevent self-aggregation and ensure the efficient spread of the progeny virus from cell to cell. Otherwise, infection would be limited to one round of replication. Described as a receptor-destroying enzyme because it cleaves a terminal sialic acid from the cellular receptors. May facilitate viral invasion of the upper airways by cleaving the sialic acid moieties on the mucin of the airway epithelial cells. Likely to plays a role in the budding process through its association with lipid rafts during intracellular transport. May additionally display a raft-association independent effect on budding. Plays a role in the determination of host range restriction on replication and virulence. Sialidase activity in late endosome/lysosome traffic seems to enhance virus replication. This is Neuraminidase from Influenza A virus (strain A/Turkey/Ireland/1378/1983 H5N8).